The primary structure comprises 415 residues: G-protein coupled receptor daf-38 (415 aa).

Positions 1–19 (MLLPSNLTTSTLMTSSSES) are enriched in low complexity. A disordered region spans residues 1-25 (MLLPSNLTTSTLMTSSSESYDADNP). At 1 to 35 (MLLPSNLTTSTLMTSSSESYDADNPGLPPEPILSD) the chain is on the extracellular side. Residues 36–56 (YVEMFTLVLNFIVGAPLNLAA) traverse the membrane as a helical segment. Residues 57 to 75 (YTQLSERPTSTRLDLLKRS) are Cytoplasmic-facing. Residues 76 to 96 (LNYSDLLVLFIYVPSRACWLL) form a helical membrane-spanning segment. The Extracellular portion of the chain corresponds to 97–108 (TYDWRGGDALCK). Cys-107 and Cys-187 are joined by a disulfide. The helical transmembrane segment at 109–129 (IVKMFHTFAFQSSSNVIVCIA) threads the bilayer. At 130–152 (VDRLLSVLSPSHHSPNKALKRTK) the chain is on the cytoplasmic side. Residues 153 to 173 (MMLIVAWIVALVISCPQLFIW) form a helical membrane-spanning segment. Residues 174 to 222 (KAYLALPEYNWSQCLQIWEIARMEKFNKPQVVPEFDAEFWYSILHISLV) are Extracellular-facing. Residues 223-243 (FWIPCIIIMLSYIIVISWVWI) traverse the membrane as a helical segment. At 244–345 (NSRPSIRHTS…NLNRSRALRV (102 aa)) the chain is on the cytoplasmic side. A helical transmembrane segment spans residues 346–366 (SLLLVVAYIICWLPYNLISLI). Residues 367-382 (QFLDRDFFSSYLKHVH) lie on the Extracellular side of the membrane. A helical transmembrane segment spans residues 383–403 (FCQQLIIFNSVVNPWLYGFFG). Residues 404 to 415 (PRRPSTTGAGRH) lie on the Cytoplasmic side of the membrane.

It belongs to the G-protein coupled receptor 1 family. In terms of assembly, heterodimer; with daf-37. Expressed in the ASI and ASK chemosensory neurons and in the IL-2 interneurons, but weakly expressed in other head neurons in hermaphrodites.

The protein resides in the cell membrane. Functionally, G-protein coupled receptor (GPCR) that forms a heterodimer with daf-37 to control dauer formation and behavior. Required for the response to dauer inducing pheromones such as the ascarosides ascr#2, ascr#3 and ascr#5. The protein is G-protein coupled receptor daf-38 of Caenorhabditis elegans.